A 361-amino-acid chain; its full sequence is MEQKQHILKQSTFSSSPSSYSSISDRPISLLSRNGLLLLLLALVLLLGVLLPWPGSPLFLFPNRLSSSLSPSPQSKWRDYTLAQAARFVAKNGTVIVCAVSSPFLPFLNNWLISVSRQKHQDKVLVIAEDYITLYKVNEKWPGHAVLIPPALDSKTAFSFGSQGFFNFTARRPQHLLQILELGYNVMYNDVDMVWLQDPFLYLEGSHDAYFTDDMPQIKPLNHSHDLPHPDRNGETYICSCMIYLRPTNGAKLLMKKWSEELQSQAWSESIRFKANDQPAFNLALNKTAHQVDLYLLSQVAFPTGGLYFKNEAWVQETKGKHVIVHNNYIIGYDRKMKRFQDYGLWLVDDHALESPLGKLE.

The tract at residues 1–21 is disordered; the sequence is MEQKQHILKQSTFSSSPSSYS. Residues 1-34 lie on the Cytoplasmic side of the membrane; that stretch reads MEQKQHILKQSTFSSSPSSYSSISDRPISLLSRN. A compositionally biased stretch (low complexity) spans 11–21; the sequence is STFSSSPSSYS. Residues 35-55 traverse the membrane as a helical; Signal-anchor for type II membrane protein segment; the sequence is GLLLLLLALVLLLGVLLPWPG. At 56 to 361 the chain is on the lumenal side; sequence SPLFLFPNRL…ALESPLGKLE (306 aa). 2 N-linked (GlcNAc...) asparagine glycosylation sites follow: N92 and N167. Residues 190 to 192 carry the DXD motif motif; sequence DVD. N222 and N286 each carry an N-linked (GlcNAc...) asparagine glycan.

Belongs to the glycosyltransferase 77 family. Requires Mn(2+) as cofactor. It depends on Mg(2+) as a cofactor. Post-translationally, glycosylated. As to expression, expressed in roots, rosette leaves, cauline leaves and stems.

It is found in the golgi apparatus membrane. In terms of biological role, catalyzes the transfer of D-xylose from UDP-alpha-D-xylose onto L-fucose. Probably involved in the biosynthesis of rhamnogalacturonan II (RG-II) through xylosylation of the internal fucose moiety of the A-chain of RG-II, a structurally complex pectic polysaccharide of the primary cell wall. RG-II is essential for the cell wall integrity of rapidly growing tissues such as roots and pollen tube growth and elongation. The protein is UDP-D-xylose:L-fucose alpha-1,3-D-xylosyltransferase 1 of Arabidopsis thaliana (Mouse-ear cress).